A 256-amino-acid polypeptide reads, in one-letter code: Imidazole glycerol phosphate synthase subunit HisF (256 aa).

Residues Asp-12 and Asp-131 contribute to the active site.

Belongs to the HisA/HisF family. Heterodimer of HisH and HisF.

The protein localises to the cytoplasm. The enzyme catalyses 5-[(5-phospho-1-deoxy-D-ribulos-1-ylimino)methylamino]-1-(5-phospho-beta-D-ribosyl)imidazole-4-carboxamide + L-glutamine = D-erythro-1-(imidazol-4-yl)glycerol 3-phosphate + 5-amino-1-(5-phospho-beta-D-ribosyl)imidazole-4-carboxamide + L-glutamate + H(+). It participates in amino-acid biosynthesis; L-histidine biosynthesis; L-histidine from 5-phospho-alpha-D-ribose 1-diphosphate: step 5/9. IGPS catalyzes the conversion of PRFAR and glutamine to IGP, AICAR and glutamate. The HisF subunit catalyzes the cyclization activity that produces IGP and AICAR from PRFAR using the ammonia provided by the HisH subunit. The chain is Imidazole glycerol phosphate synthase subunit HisF from Renibacterium salmoninarum (strain ATCC 33209 / DSM 20767 / JCM 11484 / NBRC 15589 / NCIMB 2235).